A 138-amino-acid polypeptide reads, in one-letter code: ATP synthase epsilon chain (138 aa).

Belongs to the ATPase epsilon chain family. F-type ATPases have 2 components, CF(1) - the catalytic core - and CF(0) - the membrane proton channel. CF(1) has five subunits: alpha(3), beta(3), gamma(1), delta(1), epsilon(1). CF(0) has three main subunits: a, b and c.

The protein localises to the cell inner membrane. Functionally, produces ATP from ADP in the presence of a proton gradient across the membrane. The chain is ATP synthase epsilon chain from Geobacter sp. (strain M21).